The sequence spans 191 residues: Superoxide dismutase [Mn/Fe] (191 aa).

Fe(3+)-binding residues include His-27, His-74, Asp-157, and His-161. The Mn(2+) site is built by His-27, His-74, Asp-157, and His-161.

Belongs to the iron/manganese superoxide dismutase family. As to quaternary structure, homodimer. Mn(2+) serves as cofactor. It depends on Fe(3+) as a cofactor.

The enzyme catalyses 2 superoxide + 2 H(+) = H2O2 + O2. With respect to regulation, inhibited by hydrogen peroxide. In terms of biological role, destroys superoxide anion radicals which are normally produced within the cells and which are toxic to biological systems. Catalyzes the dismutation of superoxide anion radicals into O2 and H2O2 by successive reduction and oxidation of the transition metal ion at the active site. This Porphyromonas gingivalis (strain ATCC BAA-308 / W83) protein is Superoxide dismutase [Mn/Fe] (sodB).